The chain runs to 184 residues: Flavin prenyltransferase UbiX (184 aa).

FMN contacts are provided by residues Gly9 to Ser11, Ser34, Ser85 to Thr88, and Arg120. 2 residues coordinate dimethylallyl phosphate: Tyr150 and Arg166.

Belongs to the UbiX/PAD1 family.

The catalysed reaction is dimethylallyl phosphate + FMNH2 = prenylated FMNH2 + phosphate. Flavin prenyltransferase that catalyzes the synthesis of the prenylated FMN cofactor (prenyl-FMN) for 4-hydroxy-3-polyprenylbenzoic acid decarboxylase UbiD. The prenyltransferase is metal-independent and links a dimethylallyl moiety from dimethylallyl monophosphate (DMAP) to the flavin N5 and C6 atoms of FMN. The sequence is that of Flavin prenyltransferase UbiX from Methanocaldococcus jannaschii (strain ATCC 43067 / DSM 2661 / JAL-1 / JCM 10045 / NBRC 100440) (Methanococcus jannaschii).